A 310-amino-acid polypeptide reads, in one-letter code: 4-diphosphocytidyl-2-C-methyl-D-erythritol kinase (310 aa).

The active site involves lysine 12. An ATP-binding site is contributed by proline 97–serine 107. The active site involves aspartate 139.

Belongs to the GHMP kinase family. IspE subfamily.

The enzyme catalyses 4-CDP-2-C-methyl-D-erythritol + ATP = 4-CDP-2-C-methyl-D-erythritol 2-phosphate + ADP + H(+). The protein operates within isoprenoid biosynthesis; isopentenyl diphosphate biosynthesis via DXP pathway; isopentenyl diphosphate from 1-deoxy-D-xylulose 5-phosphate: step 3/6. Catalyzes the phosphorylation of the position 2 hydroxy group of 4-diphosphocytidyl-2C-methyl-D-erythritol. The protein is 4-diphosphocytidyl-2-C-methyl-D-erythritol kinase of Synechococcus sp. (strain CC9311).